Reading from the N-terminus, the 425-residue chain is 2-methylserine hydroxymethyltransferase (425 aa).

Residues Leu-126 and 130–132 (GHL) each bind (6S)-5,6,7,8-tetrahydrofolate. Lys-235 is subject to N6-(pyridoxal phosphate)lysine.

This sequence belongs to the SHMT family. In terms of assembly, homodimer. It depends on pyridoxal 5'-phosphate as a cofactor.

The protein localises to the cytoplasm. The enzyme catalyses (6R)-5,10-methylene-5,6,7,8-tetrahydrofolate + D-alanine + H2O = 2-methylserine + (6S)-5,6,7,8-tetrahydrofolate. The protein operates within one-carbon metabolism; tetrahydrofolate interconversion. Catalyzes the reversible interconversion of alpha-methyl-L-serine to D-alanine with tetrahydrofolate (THF) serving as the one-carbon carrier. Cannot use alpha-methyl-D-serine, L-serine, D-serine or L-alanine. The chain is 2-methylserine hydroxymethyltransferase from Aminobacter sp.